Here is a 234-residue protein sequence, read N- to C-terminus: Demethylmenaquinone methyltransferase (234 aa).

Residues Thr-58, Asp-79, and 106–107 (NA) contribute to the S-adenosyl-L-methionine site.

Belongs to the class I-like SAM-binding methyltransferase superfamily. MenG/UbiE family.

It catalyses the reaction a 2-demethylmenaquinol + S-adenosyl-L-methionine = a menaquinol + S-adenosyl-L-homocysteine + H(+). Its pathway is quinol/quinone metabolism; menaquinone biosynthesis; menaquinol from 1,4-dihydroxy-2-naphthoate: step 2/2. Functionally, methyltransferase required for the conversion of demethylmenaquinol (DMKH2) to menaquinol (MKH2). This Bacillus pumilus (strain SAFR-032) protein is Demethylmenaquinone methyltransferase.